A 359-amino-acid chain; its full sequence is Uracil-DNA glycosylase (359 aa).

A mitochondrion-targeting transit peptide spans 1-21 (MWCMRRLPTNSVMTVARKRKQ). Asp162 acts as the Proton acceptor in catalysis.

This sequence belongs to the uracil-DNA glycosylase (UDG) superfamily. UNG family.

It is found in the mitochondrion. The protein localises to the nucleus. The catalysed reaction is Hydrolyzes single-stranded DNA or mismatched double-stranded DNA and polynucleotides, releasing free uracil.. Its function is as follows. Excises uracil residues from the DNA which can arise as a result of misincorporation of dUMP residues by DNA polymerase or due to deamination of cytosine. Not involved in strand-directed mismatch repair. The protein is Uracil-DNA glycosylase of Saccharomyces cerevisiae (strain ATCC 204508 / S288c) (Baker's yeast).